Consider the following 489-residue polypeptide: NADH-quinone oxidoreductase subunit N (489 aa).

A run of 14 helical transmembrane segments spans residues 6–26, 37–57, 66–86, 105–125, 127–147, 159–179, 204–224, 239–259, 271–291, 299–319, 329–349, 377–397, 408–430, and 452–472; these read VLFIAELPLLLTALTAIAVML, VFYITVIGLNAALFSLLPASS, LLIVDSYSVFYSALILIGSLA, FYLLLSLASTGAMVMAQAHHL, AIFIGVELMSLPLFGLVGYAF, YMVLSASATAFLLFGIALIYA, ITLLIVGLGMVVIGFGFKLSL, PAPVTTYLATVSKIAVFAVLL, FFYSLLGGLAFISIIIGNLLA, RLLGFSSTAHFGYLLVALIAC, VALYLVMYLLTSVGSFGVVSL, SAMTIMFLSLAGIPMTLGFIG, FHLWWLTGAVVFGSAVGLYYYLR, and ALTTGGFMVLTSAILVVLLGI.

It belongs to the complex I subunit 2 family. NDH-1 is composed of 14 different subunits. Subunits NuoA, H, J, K, L, M, N constitute the membrane sector of the complex.

It is found in the cell inner membrane. The enzyme catalyses a quinone + NADH + 5 H(+)(in) = a quinol + NAD(+) + 4 H(+)(out). In terms of biological role, NDH-1 shuttles electrons from NADH, via FMN and iron-sulfur (Fe-S) centers, to quinones in the respiratory chain. The immediate electron acceptor for the enzyme in this species is believed to be ubiquinone. Couples the redox reaction to proton translocation (for every two electrons transferred, four hydrogen ions are translocated across the cytoplasmic membrane), and thus conserves the redox energy in a proton gradient. The sequence is that of NADH-quinone oxidoreductase subunit N from Tolumonas auensis (strain DSM 9187 / NBRC 110442 / TA 4).